A 355-amino-acid polypeptide reads, in one-letter code: 3-isopropylmalate dehydrogenase (355 aa).

Arginine 98, arginine 108, arginine 132, and aspartate 223 together coordinate substrate. The Mg(2+) site is built by aspartate 223, aspartate 247, and aspartate 251. An NAD(+)-binding site is contributed by 283-295 (GSAPDIAGQQKAD).

It belongs to the isocitrate and isopropylmalate dehydrogenases family. LeuB type 2 subfamily. Homodimer. The cofactor is Mg(2+). It depends on Mn(2+) as a cofactor.

It is found in the cytoplasm. It catalyses the reaction (2R,3S)-3-isopropylmalate + NAD(+) = 4-methyl-2-oxopentanoate + CO2 + NADH. It functions in the pathway amino-acid biosynthesis; L-leucine biosynthesis; L-leucine from 3-methyl-2-oxobutanoate: step 3/4. Catalyzes the oxidation of 3-carboxy-2-hydroxy-4-methylpentanoate (3-isopropylmalate) to 3-carboxy-4-methyl-2-oxopentanoate. The product decarboxylates to 4-methyl-2 oxopentanoate. This is 3-isopropylmalate dehydrogenase from Clavibacter sepedonicus (Clavibacter michiganensis subsp. sepedonicus).